We begin with the raw amino-acid sequence, 208 residues long: Cytochrome c oxidase assembly protein CtaG (208 aa).

Topologically, residues 1–19 (MKQRPTGPDTTPRNRRGFG) are cytoplasmic. Residues 20–42 (RDTAVASVCGLVVALMVGASYAA) traverse the membrane as a helical; Signal-anchor for type II membrane protein segment. Over 43–208 (VPFYNWFCRV…SEAGPRQGAL (166 aa)) the chain is Periplasmic.

This sequence belongs to the COX11/CtaG family.

It is found in the cell inner membrane. Exerts its effect at some terminal stage of cytochrome c oxidase synthesis, probably by being involved in the insertion of the copper B into subunit I. The polypeptide is Cytochrome c oxidase assembly protein CtaG (Rhodopseudomonas palustris (strain BisA53)).